The primary structure comprises 161 residues: Allophycocyanin alpha chain (161 aa).

Position 71 is an N4-methylasparagine (N71). C81 lines the (2R,3E)-phycocyanobilin pocket.

It belongs to the phycobiliprotein family. As to quaternary structure, component of the phycobilisome. Heterodimer of an alpha and a beta chain. Post-translationally, contains one covalently linked phycocyanobilin chromophore.

It localises to the cellular thylakoid membrane. Its function is as follows. Light-harvesting photosynthetic bile pigment-protein from the phycobiliprotein complex. Allophycocyanin has a maximum absorption at approximately 650 nanometers. The sequence is that of Allophycocyanin alpha chain (apcA) from Arthrospira platensis (Spirulina platensis).